Consider the following 497-residue polypeptide: MDPLGAPSQFVDVDTLVSWGDSYEDEVNSSDSTAEAFQEDSNRSPFLYNRDINGKVVLWKGDVALLNCTAIVNTSNESLTDKNPVSESIFMLAGPDLKEDLQKLKGCRTGEAKLTKGFNLAARFIIHTVGPKYKSRYRTAAESSLYSCYRNVLQLAKEQSMSSVGFCVINSAKRGYPLEDATHIALRTVRRFLEIHGETIEKVVFAISELEEATYQKLLPLYFPRSLKEESQSLPSLPADIGNAEGEPVVPERQIRISEKPGASEDHEEDEDEGLGVDLSFIGSHAFARMEGDIDKQRKLILQGQLSEAALQKQHQRNYNRWLCQARSEDLSDIASLKALYQTGVDNCGRTVMVVVGRNIPVTLIDMDKALLYFIHVMDHIAVKEYVLVYFHTLTSEYNHLDSDFLKKLYDVVDIKYKRNLKAVYFVHPTFRSKVSTWFFTTFSVSGLKDKIHHVDSLQQLFSAISPEQIDFPPFVLEYDARENGPYFASYPPSPDL.

Positions 43-223 (RSPFLYNRDI…TYQKLLPLYF (181 aa)) constitute a Macro domain. S280 carries the post-translational modification Phosphoserine. In terms of domain architecture, CRAL-TRIO spans 333 to 481 (DIASLKALYQ…FPPFVLEYDA (149 aa)).

It belongs to the GDAP2 family.

This is Ganglioside-induced differentiation-associated-protein 2 (Gdap2) from Rattus norvegicus (Rat).